The following is a 634-amino-acid chain: Threonine--tRNA ligase (634 aa).

A TGS domain is found at 1 to 61; it reads MINIRFPDGS…NSNCELRLIT (61 aa). The tract at residues 241-532 is catalytic; the sequence is DHRKIGKVLD…LIEHYAGNLP (292 aa). Zn(2+)-binding residues include Cys332, His383, and His509.

It belongs to the class-II aminoacyl-tRNA synthetase family. As to quaternary structure, homodimer. Requires Zn(2+) as cofactor.

It is found in the cytoplasm. The catalysed reaction is tRNA(Thr) + L-threonine + ATP = L-threonyl-tRNA(Thr) + AMP + diphosphate + H(+). In terms of biological role, catalyzes the attachment of threonine to tRNA(Thr) in a two-step reaction: L-threonine is first activated by ATP to form Thr-AMP and then transferred to the acceptor end of tRNA(Thr). Also edits incorrectly charged L-seryl-tRNA(Thr). This is Threonine--tRNA ligase from Francisella tularensis subsp. novicida (strain U112).